A 425-amino-acid chain; its full sequence is Probable aminotransferase tcpI (425 aa).

The residue at position 256 (K256) is an N6-(pyridoxal phosphate)lysine.

This sequence belongs to the class-I pyridoxal-phosphate-dependent aminotransferase family. It depends on pyridoxal 5'-phosphate as a cofactor.

The protein operates within secondary metabolite biosynthesis. Its function is as follows. Probable aminotransferase; part of the gene cluster that mediates the biosynthesis of an unusual class of epipolythiodioxopiperazines (ETPs) lacking the reactive thiol group important for toxicity. Firstly, L-tyrosine is prenylated by tcpD, before undergoing condensation with L-glycine in a reaction catalyzed by the NRPS tcpP leading to the diketopiperazine (DKP) backbone. Afterwards the alpha-carbon of tyrosine is oxidized by the cytochrome P450 tcpC to form a hydroxyl group. However, in contrast other ETP biosynthesis pathways studied so far, tcpC is not able to bishydroxylate the DKP at both alpha-carbon positions, but hydroxylates the alpha-carbon of the tyrosine part and the nitrogen of the glycine part. The next steps involve an alpha,beta-elimination reaction catalyzed by tcpI, a methylation by the methyltransferase tcpN the action of the four enzyme cascade tcpG/K/J/I. Due to a dysfunctional cytochrome P450 monooxygenase tcpC, the pathway leads to the biosynthesis of probable non-toxic metabolites lacking the reactive thiol group. This chain is Probable aminotransferase tcpI, found in Claviceps purpurea (strain 20.1) (Ergot fungus).